The chain runs to 360 residues: Peptide chain release factor 1 (360 aa).

An N5-methylglutamine modification is found at Gln235. Positions 285–313 are disordered; it reads KRQQAEASTRRNLLGSGDRSDRNRTYNFP.

It belongs to the prokaryotic/mitochondrial release factor family. Post-translationally, methylated by PrmC. Methylation increases the termination efficiency of RF1.

Its subcellular location is the cytoplasm. Functionally, peptide chain release factor 1 directs the termination of translation in response to the peptide chain termination codons UAG and UAA. The sequence is that of Peptide chain release factor 1 from Salmonella paratyphi A (strain ATCC 9150 / SARB42).